The following is a 124-amino-acid chain: Small ribosomal subunit protein bS6 (124 aa).

A disordered region spans residues 97 to 124 (EQGPSAMMRRGDRDRSNRSDRRRDRDAA). A compositionally biased stretch (basic and acidic residues) spans 105 to 124 (RRGDRDRSNRSDRRRDRDAA).

This sequence belongs to the bacterial ribosomal protein bS6 family.

Functionally, binds together with bS18 to 16S ribosomal RNA. This Zymomonas mobilis subsp. mobilis (strain ATCC 31821 / ZM4 / CP4) protein is Small ribosomal subunit protein bS6.